The primary structure comprises 226 residues: UPF0758 protein PsycPRwf_0491 (226 aa).

An MPN domain is found at 102-224 (SLNRSQVVKD…TLSFAETATA (123 aa)). Zn(2+) contacts are provided by His-173, His-175, and Asp-186. Residues 173–186 (HNHPNQDATPSAAD) carry the JAMM motif motif.

It belongs to the UPF0758 family.

The polypeptide is UPF0758 protein PsycPRwf_0491 (Psychrobacter sp. (strain PRwf-1)).